The chain runs to 344 residues: Dihydroorotate dehydrogenase (quinone) (344 aa).

FMN is bound by residues A65–K69 and T89. K69 lines the substrate pocket. Position 114-118 (N114–F118) interacts with substrate. FMN is bound by residues N145 and N178. N178 is a substrate binding site. Catalysis depends on S181, which acts as the Nucleophile. N183 provides a ligand contact to substrate. FMN-binding residues include K223 and T251. N252 to T253 provides a ligand contact to substrate. Residues G274, G303, and Y324–T325 contribute to the FMN site.

It belongs to the dihydroorotate dehydrogenase family. Type 2 subfamily. As to quaternary structure, monomer. The cofactor is FMN.

Its subcellular location is the cell membrane. It carries out the reaction (S)-dihydroorotate + a quinone = orotate + a quinol. It participates in pyrimidine metabolism; UMP biosynthesis via de novo pathway; orotate from (S)-dihydroorotate (quinone route): step 1/1. Its function is as follows. Catalyzes the conversion of dihydroorotate to orotate with quinone as electron acceptor. The sequence is that of Dihydroorotate dehydrogenase (quinone) from Ralstonia nicotianae (strain ATCC BAA-1114 / GMI1000) (Ralstonia solanacearum).